A 108-amino-acid polypeptide reads, in one-letter code: Phosphoribosyl-AMP cyclohydrolase (108 aa).

Mg(2+) is bound at residue Asp78. Cys79 lines the Zn(2+) pocket. Mg(2+) contacts are provided by Asp80 and Asp82. Cys95 and Cys102 together coordinate Zn(2+).

This sequence belongs to the PRA-CH family. Homodimer. The cofactor is Mg(2+). Zn(2+) is required as a cofactor.

It localises to the cytoplasm. The catalysed reaction is 1-(5-phospho-beta-D-ribosyl)-5'-AMP + H2O = 1-(5-phospho-beta-D-ribosyl)-5-[(5-phospho-beta-D-ribosylamino)methylideneamino]imidazole-4-carboxamide. The protein operates within amino-acid biosynthesis; L-histidine biosynthesis; L-histidine from 5-phospho-alpha-D-ribose 1-diphosphate: step 3/9. Catalyzes the hydrolysis of the adenine ring of phosphoribosyl-AMP. This is Phosphoribosyl-AMP cyclohydrolase from Cenarchaeum symbiosum (strain A).